We begin with the raw amino-acid sequence, 359 residues long: Anhydro-N-acetylmuramic acid kinase (359 aa).

12-19 lines the ATP pocket; sequence GTSLDGVD.

Belongs to the anhydro-N-acetylmuramic acid kinase family.

The catalysed reaction is 1,6-anhydro-N-acetyl-beta-muramate + ATP + H2O = N-acetyl-D-muramate 6-phosphate + ADP + H(+). Its pathway is amino-sugar metabolism; 1,6-anhydro-N-acetylmuramate degradation. It participates in cell wall biogenesis; peptidoglycan recycling. Functionally, catalyzes the specific phosphorylation of 1,6-anhydro-N-acetylmuramic acid (anhMurNAc) with the simultaneous cleavage of the 1,6-anhydro ring, generating MurNAc-6-P. Is required for the utilization of anhMurNAc either imported from the medium or derived from its own cell wall murein, and thus plays a role in cell wall recycling. In Sulfurovum sp. (strain NBC37-1), this protein is Anhydro-N-acetylmuramic acid kinase.